A 172-amino-acid chain; its full sequence is Shikimate kinase (172 aa).

Residue 11–16 coordinates ATP; that stretch reads GAGKST. Ser-15 contacts Mg(2+). Residues Asp-33, Arg-57, and Gly-79 each contribute to the substrate site. Position 117 (Arg-117) interacts with ATP. Arg-136 contributes to the substrate binding site. Arg-153 serves as a coordination point for ATP.

It belongs to the shikimate kinase family. In terms of assembly, monomer. It depends on Mg(2+) as a cofactor.

Its subcellular location is the cytoplasm. It catalyses the reaction shikimate + ATP = 3-phosphoshikimate + ADP + H(+). It participates in metabolic intermediate biosynthesis; chorismate biosynthesis; chorismate from D-erythrose 4-phosphate and phosphoenolpyruvate: step 5/7. Functionally, catalyzes the specific phosphorylation of the 3-hydroxyl group of shikimic acid using ATP as a cosubstrate. This Pseudomonas syringae pv. tomato (strain ATCC BAA-871 / DC3000) protein is Shikimate kinase.